A 436-amino-acid polypeptide reads, in one-letter code: Enolase 1 (436 aa).

Residue Ser40 coordinates Mg(2+). The cysteines at positions 147 and 169 are disulfide-linked. 2 residues coordinate (2R)-2-phosphoglycerate: Gln164 and Glu208. Catalysis depends on Glu208, which acts as the Proton donor. Residues Asp243, Glu296, and Asp322 each contribute to the Mg(2+) site. (2R)-2-phosphoglycerate is bound at residue Asp322. Lys347 (proton acceptor) is an active-site residue. (2R)-2-phosphoglycerate-binding residues include Arg376 and Ser377.

The protein belongs to the enolase family. In terms of assembly, homodimer. Homotetramer. Interacts with methyltransferase METH; the interaction inhibits METH catalytic activity; 2-phosphoglycerate binding to ENO prevents the interaction with METH. It depends on Mg(2+) as a cofactor.

Its subcellular location is the cytoplasm. The protein localises to the nucleus. It catalyses the reaction (2R)-2-phosphoglycerate = phosphoenolpyruvate + H2O. It functions in the pathway carbohydrate degradation; glycolysis; pyruvate from D-glyceraldehyde 3-phosphate: step 4/5. In terms of biological role, glycolytic enzyme that catalyzes the conversion of 2-phosphoglycerate to phosphoenolpyruvate. Inhibits tRNA methyltransferase METH catalytic activity in the absence of 2-phosphoglycerate. In Entamoeba histolytica (strain ATCC 30459 / HM-1:IMSS / ABRM), this protein is Enolase 1.